Here is a 182-residue protein sequence, read N- to C-terminus: Aralkylamine dehydrogenase light chain (182 aa).

Residues 1 to 47 constitute a signal peptide (tat-type signal); it reads MRWLDKFGESLSRSVAHKTSRRSVLRSVGKLMVGSAFVLPVLPVARA. Intrachain disulfides connect Cys-75–Cys-140, Cys-81–Cys-113, Cys-88–Cys-171, Cys-90–Cys-138, Cys-91–Cys-135, Cys-98–Cys-129, and Cys-130–Cys-161. Residue Asp-84 coordinates substrate. Residue Trp-109 is the Tryptophylquinone 6'-substrate hemiaminal intermediate of the active site. Position 109 is a tryptophylquinone (Trp-109). The segment at residues 109 to 160 is a cross-link (tryptophan tryptophylquinone (Trp-Trp)); sequence WIGTCHNPHDGKDYLISYHDCCGKTACGRCQCNTQTRERPGYEFFLHNDVNW. Residue Asp-128 is the Proton acceptor of the active site. 156–158 contacts substrate; sequence NDV.

It belongs to the aromatic amine dehydrogenase light chain family. In terms of assembly, heterotetramer of two light and two heavy chains. Binds two azurin molecules per heterotetramer. Tryptophan tryptophylquinone residue is required as a cofactor. Post-translationally, tryptophan tryptophylquinone (TTQ) is formed by oxidation of the indole ring of a tryptophan to form tryptophylquinone followed by covalent cross-linking with another tryptophan residue. Predicted to be exported by the Tat system. The position of the signal peptide cleavage has been experimentally proven.

It localises to the periplasm. The catalysed reaction is an aralkylamine + 2 oxidized [azurin] + H2O = an aromatic aldehyde + 2 reduced [azurin] + NH4(+) + 2 H(+). Irreversibly inhibited by phenylhydrazine, hydroxylamine, semicarbazide, hydrazine and aminoguanidine. Reversibly inhibited by isonicotinic acid hydrazide (isoniazid) and isonicotinic acid 2-isopropyl hydrazide (iproniazid). Its function is as follows. Oxidizes primary aromatic amines and, more slowly, some long-chain aliphatic amines, but not methylamine or ethylamine. Uses azurin as an electron acceptor to transfer electrons from the reduced tryptophylquinone cofactor. The polypeptide is Aralkylamine dehydrogenase light chain (Alcaligenes faecalis).